The chain runs to 848 residues: ATP-dependent Clp protease ATP-binding subunit ClpC1 (848 aa).

The Clp R domain occupies 2–144; sequence FERFTDRARK…RQQVIQLLSG (143 aa). 2 repeat regions span residues 5 to 70 and 80 to 144; these read FTDR…IGQG and FTPR…LLSG. Positions 171–418 are i; the sequence is LDQFGRNLTA…RMRIRRMTAP (248 aa). Residue 216 to 223 coordinates ATP; it reads GEPGVGKT. In terms of domain architecture, UVR spans 425 to 460; that stretch reads DEKIAEARREKESAIDAQDFEKAASLRDREKTLVAQ. The interval 479–670 is II; the sequence is VDDEQIAEVL…VLIFTSNLGT (192 aa). ATP is bound at residue 553–560; sequence GPSGVGKT. Residues 821–848 are disordered; it reads TGTRKPPAEPDLAKAGAHSAGGPEPAAR.

This sequence belongs to the ClpA/ClpB family. ClpC subfamily.

Functionally, ATP-dependent specificity component of the Clp protease. It directs the protease to specific substrates. Can perform chaperone functions in the absence of ClpP. The protein is ATP-dependent Clp protease ATP-binding subunit ClpC1 (clpC1) of Mycobacterium tuberculosis (strain CDC 1551 / Oshkosh).